Consider the following 104-residue polypeptide: Large ribosomal subunit protein eL42 (104 aa).

The tract at residues 22–56 is disordered; that stretch reads KVSQAKKSKDNPRAQGNRRYARKQRGYGGQTKPIL.

Belongs to the eukaryotic ribosomal protein eL42 family.

The sequence is that of Large ribosomal subunit protein eL42 (RPL44) from Encephalitozoon cuniculi (strain GB-M1) (Microsporidian parasite).